Reading from the N-terminus, the 24-residue chain is RuBisCO large subunit-binding protein subunit beta, chloroplastic (24 aa).

This sequence belongs to the chaperonin (HSP60) family. Oligomer of probably six alpha and six beta subunits.

It is found in the plastid. Its subcellular location is the chloroplast. In terms of biological role, this protein binds RuBisCO small and large subunits and is implicated in the assembly of the enzyme oligomer. The chain is RuBisCO large subunit-binding protein subunit beta, chloroplastic from Populus euphratica (Euphrates poplar).